A 353-amino-acid chain; its full sequence is Probable dual-specificity RNA methyltransferase RlmN (353 aa).

Catalysis depends on E90, which acts as the Proton acceptor. The Radical SAM core domain occupies 96–326; it reads YKHGNSICIS…VTTRREMGSD (231 aa). A disulfide bond links C103 and C331. Positions 110, 114, and 117 each coordinate [4Fe-4S] cluster. S-adenosyl-L-methionine is bound by residues 157 to 158, S189, 212 to 214, and N288; these read GE and SLH. Residue C331 is the S-methylcysteine intermediate of the active site.

This sequence belongs to the radical SAM superfamily. RlmN family. Requires [4Fe-4S] cluster as cofactor.

It is found in the cytoplasm. The catalysed reaction is adenosine(2503) in 23S rRNA + 2 reduced [2Fe-2S]-[ferredoxin] + 2 S-adenosyl-L-methionine = 2-methyladenosine(2503) in 23S rRNA + 5'-deoxyadenosine + L-methionine + 2 oxidized [2Fe-2S]-[ferredoxin] + S-adenosyl-L-homocysteine. It catalyses the reaction adenosine(37) in tRNA + 2 reduced [2Fe-2S]-[ferredoxin] + 2 S-adenosyl-L-methionine = 2-methyladenosine(37) in tRNA + 5'-deoxyadenosine + L-methionine + 2 oxidized [2Fe-2S]-[ferredoxin] + S-adenosyl-L-homocysteine. Functionally, specifically methylates position 2 of adenine 2503 in 23S rRNA and position 2 of adenine 37 in tRNAs. The sequence is that of Probable dual-specificity RNA methyltransferase RlmN from Clostridium beijerinckii (strain ATCC 51743 / NCIMB 8052) (Clostridium acetobutylicum).